Reading from the N-terminus, the 134-residue chain is Translation initiation factor 2 subunit beta (134 aa).

Belongs to the eIF-2-beta/eIF-5 family. As to quaternary structure, heterotrimer composed of an alpha, a beta and a gamma chain.

In terms of biological role, eIF-2 functions in the early steps of protein synthesis by forming a ternary complex with GTP and initiator tRNA. The polypeptide is Translation initiation factor 2 subunit beta (Pyrobaculum calidifontis (strain DSM 21063 / JCM 11548 / VA1)).